Reading from the N-terminus, the 253-residue chain is Small ribosomal subunit protein uS3 (253 aa).

The region spanning 38-106 (IRKYIHARLS…EVQINIFEIK (69 aa)) is the KH type-2 domain. Residues 216–253 (AGMDKKQAGQGGGKGGDSPRGDRKPFNKGGKPDARKRK) are disordered. The span at 232–253 (DSPRGDRKPFNKGGKPDARKRK) shows a compositional bias: basic and acidic residues.

This sequence belongs to the universal ribosomal protein uS3 family. As to quaternary structure, part of the 30S ribosomal subunit. Forms a tight complex with proteins S10 and S14.

Its function is as follows. Binds the lower part of the 30S subunit head. Binds mRNA in the 70S ribosome, positioning it for translation. This Flavobacterium psychrophilum (strain ATCC 49511 / DSM 21280 / CIP 103535 / JIP02/86) protein is Small ribosomal subunit protein uS3.